The following is an 833-amino-acid chain: Protein translocase subunit SecA (833 aa).

ATP is bound by residues Q87, 105 to 109, and D494; that span reads GEGKT. Residues 789 to 816 form a disordered region; sequence PAAVAYSGGEAEAGPAQPHREDPKVGRN. Over residues 806 to 815 the composition is skewed to basic and acidic residues; sequence PHREDPKVGR. Zn(2+) contacts are provided by C819, C821, C830, and C831.

This sequence belongs to the SecA family. In terms of assembly, monomer and homodimer. Part of the essential Sec protein translocation apparatus which comprises SecA, SecYEG and auxiliary proteins SecDF-YajC and YidC. It depends on Zn(2+) as a cofactor.

The protein localises to the cell inner membrane. It localises to the cytoplasm. It catalyses the reaction ATP + H2O + cellular proteinSide 1 = ADP + phosphate + cellular proteinSide 2.. Its function is as follows. Part of the Sec protein translocase complex. Interacts with the SecYEG preprotein conducting channel. Has a central role in coupling the hydrolysis of ATP to the transfer of proteins into and across the cell membrane, serving as an ATP-driven molecular motor driving the stepwise translocation of polypeptide chains across the membrane. The chain is Protein translocase subunit SecA from Nitratidesulfovibrio vulgaris (strain ATCC 29579 / DSM 644 / CCUG 34227 / NCIMB 8303 / VKM B-1760 / Hildenborough) (Desulfovibrio vulgaris).